An 830-amino-acid polypeptide reads, in one-letter code: Lon protease 3 (830 aa).

Positions 19–213 constitute a Lon N-terminal domain; that stretch reads VPLLPLRDII…RLIELMQAEI (195 aa). 367-374 contributes to the ATP binding site; sequence GPPGVGKT. Residues 604 to 784 enclose the Lon proteolytic domain; that stretch reads RDEVGLVNGL…DDVLREALIL (181 aa). Active-site residues include serine 690 and lysine 733. Residues 811 to 823 are compositionally biased toward low complexity; it reads PVKAPPAAAGEPT. The interval 811–830 is disordered; it reads PVKAPPAAAGEPTPAAPPGA.

Belongs to the peptidase S16 family. As to quaternary structure, homohexamer. Organized in a ring with a central cavity.

It localises to the cytoplasm. The enzyme catalyses Hydrolysis of proteins in presence of ATP.. In terms of biological role, ATP-dependent serine protease that mediates the selective degradation of mutant and abnormal proteins as well as certain short-lived regulatory proteins. Required for cellular homeostasis and for survival from DNA damage and developmental changes induced by stress. Degrades polypeptides processively to yield small peptide fragments that are 5 to 10 amino acids long. Binds to DNA in a double-stranded, site-specific manner. The chain is Lon protease 3 from Sorangium cellulosum (strain So ce56) (Polyangium cellulosum (strain So ce56)).